Here is a 324-residue protein sequence, read N- to C-terminus: Galectin-4 (324 aa).

Galectin domains are found at residues 19 to 150 and 196 to 324; these read YKRP…INFL and YVGT…YVQI. 257–263 lines the a beta-D-galactoside pocket; that stretch reads WGSEERK. S259 bears the Phosphoserine mark.

As to quaternary structure, monomer. As to expression, highly expressed in full-length form in small and large intestine and stomach but was not detected in other tissues including lung, liver, kidney and spleen.

Its function is as follows. Galectin that binds lactose and a related range of sugars. In Rattus norvegicus (Rat), this protein is Galectin-4 (Lgals4).